The primary structure comprises 527 residues: Transcription factor bHLH157 (527 aa).

Disordered stretches follow at residues 295 to 318 and 335 to 368; these read SGVNQSKRRKLDTSSAHSSSLFPQ and SSIGGNWKKPHEEGVKKKRAKAGESRRPRPKDRQ. Over residues 307-318 the composition is skewed to polar residues; the sequence is TSSAHSSSLFPQ. Positions 341–348 match the Nuclear localization signal motif; the sequence is WKKPHEEG. A compositionally biased stretch (basic and acidic residues) spans 343–368; the sequence is KPHEEGVKKKRAKAGESRRPRPKDRQ. In terms of domain architecture, bHLH spans 354–403; that stretch reads AKAGESRRPRPKDRQMIQDRIKELRGMIPNGAKCSIDTLLDLTIKHMVFM.

Belongs to the bHLH protein family. LHW subfamily. Homodimer.

It localises to the nucleus. In terms of biological role, transcription factor that may regulate root development. The sequence is that of Transcription factor bHLH157 (BHLH157) from Arabidopsis thaliana (Mouse-ear cress).